Reading from the N-terminus, the 347-residue chain is N-acetyl-gamma-glutamyl-phosphate reductase (347 aa).

Residue C150 is part of the active site.

The protein belongs to the NAGSA dehydrogenase family. Type 1 subfamily.

Its subcellular location is the cytoplasm. It carries out the reaction N-acetyl-L-glutamate 5-semialdehyde + phosphate + NADP(+) = N-acetyl-L-glutamyl 5-phosphate + NADPH + H(+). Its pathway is amino-acid biosynthesis; L-arginine biosynthesis; N(2)-acetyl-L-ornithine from L-glutamate: step 3/4. Functionally, catalyzes the NADPH-dependent reduction of N-acetyl-5-glutamyl phosphate to yield N-acetyl-L-glutamate 5-semialdehyde. The polypeptide is N-acetyl-gamma-glutamyl-phosphate reductase (Halothermothrix orenii (strain H 168 / OCM 544 / DSM 9562)).